Here is a 269-residue protein sequence, read N- to C-terminus: Thyroxine 5-deiodinase (269 aa).

The Cytoplasmic portion of the chain corresponds to 1–14 (MLPAPHTCCRLLQQ). A helical; Signal-anchor for type II membrane protein transmembrane segment spans residues 15–35 (LLACCLLLPRFLLTVLLLWLL). The Extracellular segment spans residues 36–269 (DFPCVRRRVI…TGNGALVIQV (234 aa)). Sec-133 is an active-site residue. Sec-133 is a non-standard amino acid (selenocysteine).

It belongs to the iodothyronine deiodinase family. In terms of assembly, monomer. Homodimer. May undergo minor heretodimerization with DIO1 and DIO2.

The protein resides in the cell membrane. The protein localises to the endosome membrane. It catalyses the reaction 3,3',5'-triiodo-L-thyronine + iodide + A + H(+) = L-thyroxine + AH2. The enzyme catalyses 3,3'-diiodo-L-thyronine + iodide + A + H(+) = 3,3',5-triiodo-L-thyronine + AH2. The catalysed reaction is 3-iodo-L-thyronine + iodide + A + H(+) = 3,5-diiodo-L-thyronine + AH2. It carries out the reaction L-thyronine + iodide + A + H(+) = 3-iodo-L-thyronine + AH2. It catalyses the reaction 3',5'-diiodo-L-thyronine + iodide + A + H(+) = 3,3',5'-triiodo-L-thyronine + AH2. The enzyme catalyses 3'-iodo-L-thyronine + iodide + A + H(+) = 3,3'-diiodo-L-thyronine + AH2. The catalysed reaction is 3,3',5'-triiodothyronamine + iodide + A + H(+) = 3,3',5,5'-tetraiodothyronamine + AH2. It carries out the reaction 3',5'-diiodothyronamine + iodide + A + H(+) = 3,3',5'-triiodothyronamine + AH2. It catalyses the reaction 3,3'-diiodothyronamine + iodide + A + H(+) = 3,3',5-triiodothyronamine + AH2. The enzyme catalyses 3-iodothyronamine + iodide + A + H(+) = 3,5-diiodothyronamine + AH2. The catalysed reaction is 3'-iodothyronamine + iodide + A + H(+) = 3,3'-diiodothyronamine + AH2. It carries out the reaction thyronamine + iodide + A + H(+) = 3-iodothyronamine + AH2. Functionally, plays a crucial role in the metabolism of thyroid hormones (TH) and has specific roles in TH activation and inactivation by deiodination. Catalyzes the deiodination of L-thyroxine (T4) to 3,3',5'-triiodothyronine (rT3), 3,5-diiodothyronine (3,5-T2) to 3-monoiodothyronine (3-T1), rT3 to 3',5'-diiodothyronine (3',5'-T2) and 3,3'-diiodothyronine (3,3'-T2) to 3'-monoiodothyronine (3'-T1) via inner-ring deiodination (IRD). Catalyzes the deiodination of 3,5,3'-triiodothyronine (T3) to 3,3'-diiodothyronine (3,3'-T2) via IRD. Catalyzes the deiodination of 3-T1 to L-thyronine (T0) via outer-ring deiodination (ORD). Catalyzes the tyrosyl ring deiodinations of 3,3',5,5'-tetraiodothyronamine, 3,3',5'-triiodothyronamine, 3,5,3'-triiodothyronamine, 3,5-diiodothyronamine, 3,3'-diiodothyronamine and 3-iodothyronamine. The polypeptide is Thyroxine 5-deiodinase (dio3) (Aquarana catesbeiana (American bullfrog)).